A 380-amino-acid polypeptide reads, in one-letter code: Putative S-(hydroxymethyl)glutathione dehydrogenase 2 (380 aa).

A Zn(2+)-binding site is contributed by cysteine 50. Histidine 51 provides a ligand contact to NAD(+). Zn(2+) contacts are provided by histidine 72, glutamate 73, cysteine 102, cysteine 105, cysteine 108, cysteine 116, and cysteine 179. NAD(+) is bound by residues 204–209 (GLGSVG), aspartate 228, and 297–299 (IGV).

The protein belongs to the zinc-containing alcohol dehydrogenase family. Class-III subfamily. Requires Zn(2+) as cofactor.

It catalyses the reaction a primary alcohol + NAD(+) = an aldehyde + NADH + H(+). The catalysed reaction is a secondary alcohol + NAD(+) = a ketone + NADH + H(+). It carries out the reaction S-(hydroxymethyl)glutathione + NADP(+) = S-formylglutathione + NADPH + H(+). The enzyme catalyses S-(hydroxymethyl)glutathione + NAD(+) = S-formylglutathione + NADH + H(+). It catalyses the reaction S-nitrosoglutathione + NADH + H(+) = S-(hydroxysulfenamide)glutathione + NAD(+). Functionally, oxidizes long-chain alcohols and, in the presence of glutathione, is able to oxidize formaldehyde. Also acts as a S-nitroso-glutathione reductase by catalyzing the NADH-dependent reduction of S-nitrosoglutathione, thereby regulating protein S-nitrosylation. The polypeptide is Putative S-(hydroxymethyl)glutathione dehydrogenase 2 (Schizosaccharomyces pombe (strain 972 / ATCC 24843) (Fission yeast)).